Reading from the N-terminus, the 141-residue chain is NADH dehydrogenase [ubiquinone] 1 alpha subcomplex subunit 11 (141 aa).

Residue Ala2 is modified to N-acetylalanine. Helical transmembrane passes span 22 to 43 (TYAT…SVAL) and 58 to 80 (RYTF…SAQV).

Complex I is composed of 45 different subunits.

It localises to the mitochondrion inner membrane. Functionally, accessory subunit of the mitochondrial membrane respiratory chain NADH dehydrogenase (Complex I), that is believed not to be involved in catalysis. Complex I functions in the transfer of electrons from NADH to the respiratory chain. The immediate electron acceptor for the enzyme is believed to be ubiquinone. The chain is NADH dehydrogenase [ubiquinone] 1 alpha subcomplex subunit 11 (NDUFA11) from Bos taurus (Bovine).